Here is a 499-residue protein sequence, read N- to C-terminus: MEEEGVKEGGQRPRSAQTADKAGWIKKSSGGFLGLWKDRYLLLCQAQLLVYENEDEQKCVETVELGSYEKCQDLRALLKRKHRFILLRSPGNKVSDIKFQAPSGEEKESWIKALNEGINRGKNKAFDEVKVDKSCVLEHVTRDRVRRDQRRRPPTRVHLKEVANAASDGLSRLDLDVPDSGPPVLAPSNDVDAAQPRETPRPPMPPAKPSPAPETSSAGDRMETPVGQSAPAPVPASSEAHPGSQEDLETPVVEDSDSEQPPNRILPDKLKVSWENPSPEEAPDSESAEPPQVPGAETSEAGPREGGKPPTPPPKILSEKLKASMSGMEASGPAQSPGASEASAPGPAEVSVNGVDDSPEPLQSSQAAGPPGTPPKAATTSTTLPPWDLQPQLHPRCSSLGDLLGEGPRRRRQPGEQLHRAQLEVKVASEKTEKLLNKVLGGESASVNAETLLSQAVEQLRQATQVLQEIRDLEEMNREAPGLREKRRELVTLYRRSVP.

A compositionally biased stretch (basic and acidic residues) spans 1–11; it reads MEEEGVKEGGQ. The tract at residues 1-21 is disordered; it reads MEEEGVKEGGQRPRSAQTADK. Residues 18 to 119 form the PH domain; that stretch reads TADKAGWIKK…WIKALNEGIN (102 aa). Ser-167 bears the Phosphoserine mark. The interval 170–419 is disordered; the sequence is LSRLDLDVPD…RRRQPGEQLH (250 aa). Residues 201–212 are compositionally biased toward pro residues; it reads RPPMPPAKPSPA. Residues 229–238 are compositionally biased toward low complexity; it reads SAPAPVPASS. Phosphoserine is present on residues Ser-237 and Ser-238. The span at 246-258 shows a compositional bias: acidic residues; that stretch reads EDLETPVVEDSDS. The residue at position 273 (Ser-273) is a Phosphoserine. Phosphothreonine occurs at positions 298 and 311. Composition is skewed to low complexity over residues 329 to 349 and 367 to 386; these read EASGPAQSPGASEASAPGPAE and AAGPPGTPPKAATTSTTLPP. A Phosphoserine modification is found at Ser-399. Residues 416–492 adopt a coiled-coil conformation; the sequence is EQLHRAQLEV…LREKRRELVT (77 aa).

The sequence is that of Pleckstrin homology domain-containing family O member 2 (PLEKHO2) from Bos taurus (Bovine).